A 590-amino-acid polypeptide reads, in one-letter code: Membrane protein insertase YidC (590 aa).

Helical transmembrane passes span 5 to 25 (SVIGFALIAAIMIVWLQFMKP), 368 to 388 (GLIIIIFAFLIKLVTWPLSLA), 433 to 453 (LGGCLPTVIQMPLLFAMFYVF), 483 to 503 (LPLYGDHIAIMPILMAVTVFF), and 519 to 539 (IMMWLFPAMMLFFFNNMPAGL).

This sequence belongs to the OXA1/ALB3/YidC family. Type 1 subfamily. Interacts with the Sec translocase complex via SecD. Specifically interacts with transmembrane segments of nascent integral membrane proteins during membrane integration.

The protein resides in the cell inner membrane. In terms of biological role, required for the insertion and/or proper folding and/or complex formation of integral membrane proteins into the membrane. Involved in integration of membrane proteins that insert both dependently and independently of the Sec translocase complex, as well as at least some lipoproteins. Aids folding of multispanning membrane proteins. The sequence is that of Membrane protein insertase YidC from Chlorobaculum tepidum (strain ATCC 49652 / DSM 12025 / NBRC 103806 / TLS) (Chlorobium tepidum).